Reading from the N-terminus, the 513-residue chain is MQLNSTEISELIKQRIAQFNVVSEAHNEGTIVSVSDGVIRIHGLADCMQGEMISLPGNRYAIALNLERDSVGAVVMGPYADLAEGMKVKCTGRILEVPVGRGLLGRVVNTLGAPIDGKGPVDNDGFSAVEAIAPGVIDRQSVDQPVQTGYKAVDSMIPIGRGQRELIIGDRQTGKTALAIDAIINQRDSGIKCIYVAIGQKASTISNVVRKLEEHGALANTIVVVATASESAALQYLAPYAGCAMGEYFRDRGEDALIIYDDLSKQAVAYRQISLLLRRPPGREAFPGDVFYLHSRLLERAARVNADYVEAFTKGEVKGKTGSLTALPIIETQAGDVSAFVPTNVISITDGQIFLESNLFNAGIRPAVNPGISVSRVGGAAQTKIMKKLSGGIRTALAQYRELAAFSQFASDLDDATRKQLDHGQKVTELLKQKQYAPMSVAQQSLVLFAAERGYLADVELAKIGSFEAALLAYVDRDHAPLMQEINQSGGYNDEIEGKLKGILDSFKATQSW.

Position 169-176 (G169–T176) interacts with ATP.

Belongs to the ATPase alpha/beta chains family. In terms of assembly, F-type ATPases have 2 components, CF(1) - the catalytic core - and CF(0) - the membrane proton channel. CF(1) has five subunits: alpha(3), beta(3), gamma(1), delta(1), epsilon(1). CF(0) has three main subunits: a(1), b(2) and c(9-12). The alpha and beta chains form an alternating ring which encloses part of the gamma chain. CF(1) is attached to CF(0) by a central stalk formed by the gamma and epsilon chains, while a peripheral stalk is formed by the delta and b chains.

It localises to the cell inner membrane. The catalysed reaction is ATP + H2O + 4 H(+)(in) = ADP + phosphate + 5 H(+)(out). Produces ATP from ADP in the presence of a proton gradient across the membrane. The alpha chain is a regulatory subunit. This chain is ATP synthase subunit alpha, found in Salmonella agona (strain SL483).